A 200-amino-acid chain; its full sequence is Mediator of RNA polymerase II transcription subunit 8 (200 aa).

Belongs to the Mediator complex subunit 8 family. As to quaternary structure, component of the Mediator complex.

The protein resides in the nucleus. Functionally, component of the Mediator complex, a coactivator involved in the regulated transcription of nearly all RNA polymerase II-dependent genes. Mediator functions as a bridge to convey information from gene-specific regulatory proteins to the basal RNA polymerase II transcription machinery. Mediator is recruited to promoters by direct interactions with regulatory proteins and serves as a scaffold for the assembly of a functional preinitiation complex with RNA polymerase II and the general transcription factors. This Schizosaccharomyces pombe (strain 972 / ATCC 24843) (Fission yeast) protein is Mediator of RNA polymerase II transcription subunit 8 (med8).